The sequence spans 167 residues: tRNA-specific adenosine deaminase (167 aa).

The CMP/dCMP-type deaminase domain occupies 6 to 117; it reads FSHEYWMRHA…DAKTGAAGSL (112 aa). H57 contacts Zn(2+). E59 (proton donor) is an active-site residue. Zn(2+) contacts are provided by C87 and C90.

This sequence belongs to the cytidine and deoxycytidylate deaminase family. Homodimer. The cofactor is Zn(2+).

It carries out the reaction adenosine(34) in tRNA + H2O + H(+) = inosine(34) in tRNA + NH4(+). Catalyzes the deamination of adenosine to inosine at the wobble position 34 of tRNA(Arg2). This is tRNA-specific adenosine deaminase from Escherichia coli O157:H7.